The chain runs to 419 residues: Menaquinone reductase, integral membrane subunit (419 aa).

Transmembrane regions (helical) follow at residues 23-43 (LSKF…GLYA), 61-81 (FGFG…AGAF), 98-118 (IINL…LVLV), 143-163 (VIFC…PLIL), 176-196 (AVAH…AFLS), 221-241 (FFIW…SGPV), 270-290 (IAGT…YAWA), 316-336 (LWAE…VPAL), 341-361 (VLFY…RYVM), and 383-403 (WAEW…LSLS).

It belongs to the NrfD family. The Qrc complex is composed of four subunits: QrcA, QrcB, QrcC and QrcD. Can form a supercomplex with the [NiFe] hydrogenase HynA1 and the tetraheme Type I cytochrome c3 TpIc(3), its physiological electron donors.

Its subcellular location is the cell inner membrane. In terms of biological role, component of the respiratory Qrc complex, that catalyzes the reduction of the menaquinone pool using electrons transferred from the reduced periplasmic cytochrome c3, and which is probably involved in sulfate respiration. Is likely essential for growth on H(2) or formate since the periplasmic hydrogenases and/or formate dehydrogenases act as primary electron donors for the Qrc complex. The QrcD subunit anchors the protein complex to the membrane and likely interacts with the quinone pool. In Nitratidesulfovibrio vulgaris (strain ATCC 29579 / DSM 644 / CCUG 34227 / NCIMB 8303 / VKM B-1760 / Hildenborough) (Desulfovibrio vulgaris), this protein is Menaquinone reductase, integral membrane subunit.